The chain runs to 304 residues: Tissue factor pathway inhibitor (304 aa).

A signal peptide spans 1–28 (MIYTMKKVHALWASVCLLLNLAPAPLNA). An O-linked (GalNAc...) threonine; partial glycan is attached at threonine 42. BPTI/Kunitz inhibitor domains are found at residues 54 to 104 (CAFK…KKMC) and 125 to 175 (CFLE…KNIC). 6 disulfide bridges follow: cysteine 54–cysteine 104, cysteine 63–cysteine 87, cysteine 79–cysteine 100, cysteine 125–cysteine 175, cysteine 134–cysteine 158, and cysteine 150–cysteine 171. The N-linked (GlcNAc...) asparagine glycan is linked to asparagine 145. Asparagine 195 carries N-linked (GlcNAc...) asparagine glycosylation. The O-linked (GalNAc...) serine; partial glycan is linked to serine 202. O-linked (GalNAc...) threonine glycosylation occurs at threonine 203. Residues 217–267 (CLTPADRGLCRANENRFYYNSVIGKCRPFKYSGCGGNENNFTSKQECLRAC) form the BPTI/Kunitz inhibitor 3 domain. Intrachain disulfides connect cysteine 217–cysteine 267, cysteine 226–cysteine 250, and cysteine 242–cysteine 263.

In terms of processing, O-glycosylated. In terms of tissue distribution, mostly in endothelial cells.

It localises to the secreted. The protein localises to the microsome membrane. Its function is as follows. Inhibits factor X (X(a)) directly and, in a Xa-dependent way, inhibits VIIa/tissue factor activity, presumably by forming a quaternary Xa/LACI/VIIa/TF complex. It possesses an antithrombotic action and also the ability to associate with lipoproteins in plasma. This is Tissue factor pathway inhibitor (TFPI) from Homo sapiens (Human).